A 180-amino-acid chain; its full sequence is Large ribosomal subunit protein bL17 (180 aa).

Positions 134–180 are disordered; the sequence is AQAKAKKAAAMPTEESEAKPAEEGDVVGASEPDAKAPEEPPTEAPEN.

Belongs to the bacterial ribosomal protein bL17 family. Part of the 50S ribosomal subunit. Contacts protein L32.

This chain is Large ribosomal subunit protein bL17, found in Mycobacterium tuberculosis (strain CDC 1551 / Oshkosh).